A 219-amino-acid polypeptide reads, in one-letter code: UPF0073 inner membrane protein YqfA (219 aa).

Residues Met-1–His-23 lie on the Cytoplasmic side of the membrane. Residues Gly-24–Leu-44 form a helical membrane-spanning segment. Over Asn-45 to Ser-53 the chain is Periplasmic. The chain crosses the membrane as a helical span at residues Tyr-54 to Ile-74. The Cytoplasmic portion of the chain corresponds to Pro-75–Ala-90. Residues Ile-91–Leu-111 form a helical membrane-spanning segment. The Periplasmic segment spans residues Ala-112–Arg-113. The helical transmembrane segment at Gly-114 to Ala-134 threads the bilayer. At His-135–Lys-138 the chain is on the cytoplasmic side. The helical transmembrane segment at Ile-139–Met-159 threads the bilayer. The Periplasmic segment spans residues Ala-160–Ala-165. A helical membrane pass occupies residues Gly-166–Val-186. The Cytoplasmic segment spans residues Cys-187 to Ala-195. The helical transmembrane segment at Ile-196–Ile-216 threads the bilayer. Residues Gly-217–Ala-219 lie on the Periplasmic side of the membrane.

This sequence belongs to the UPF0073 (Hly-III) family.

Its subcellular location is the cell inner membrane. The protein is UPF0073 inner membrane protein YqfA (yqfA) of Escherichia coli O157:H7.